A 236-amino-acid polypeptide reads, in one-letter code: 2,3,4,5-tetrahydropyridine-2,6-dicarboxylate N-acetyltransferase (236 aa).

It belongs to the transferase hexapeptide repeat family. DapH subfamily.

It catalyses the reaction (S)-2,3,4,5-tetrahydrodipicolinate + acetyl-CoA + H2O = L-2-acetamido-6-oxoheptanedioate + CoA. It functions in the pathway amino-acid biosynthesis; L-lysine biosynthesis via DAP pathway; LL-2,6-diaminopimelate from (S)-tetrahydrodipicolinate (acetylase route): step 1/3. Functionally, catalyzes the transfer of an acetyl group from acetyl-CoA to tetrahydrodipicolinate. This is 2,3,4,5-tetrahydropyridine-2,6-dicarboxylate N-acetyltransferase from Thermotoga maritima (strain ATCC 43589 / DSM 3109 / JCM 10099 / NBRC 100826 / MSB8).